The primary structure comprises 181 residues: Probable pyruvoyl-dependent arginine decarboxylase (181 aa).

S43 carries the post-translational modification Pyruvic acid (Ser).

It belongs to the PdaD family. Pyruvate is required as a cofactor.

It catalyses the reaction L-arginine + H(+) = agmatine + CO2. This is Probable pyruvoyl-dependent arginine decarboxylase from Chlorobium phaeovibrioides (strain DSM 265 / 1930) (Prosthecochloris vibrioformis (strain DSM 265)).